The chain runs to 101 residues: Integration host factor subunit beta (101 aa).

The disordered stretch occupies residues 62-84; that stretch reads RNPKTGESVALPGKHVPHFKPGK.

This sequence belongs to the bacterial histone-like protein family. As to quaternary structure, heterodimer of an alpha and a beta chain.

In terms of biological role, this protein is one of the two subunits of integration host factor, a specific DNA-binding protein that functions in genetic recombination as well as in transcriptional and translational control. In Stenotrophomonas maltophilia (strain K279a), this protein is Integration host factor subunit beta.